Consider the following 428-residue polypeptide: Enolase (428 aa).

(2R)-2-phosphoglycerate is bound at residue Q164. E208 functions as the Proton donor in the catalytic mechanism. Mg(2+) contacts are provided by D245, E286, and D313. Residues K338, R367, S368, and K389 each contribute to the (2R)-2-phosphoglycerate site. K338 functions as the Proton acceptor in the catalytic mechanism.

The protein belongs to the enolase family. The cofactor is Mg(2+).

It localises to the cytoplasm. The protein localises to the secreted. The protein resides in the cell surface. It carries out the reaction (2R)-2-phosphoglycerate = phosphoenolpyruvate + H2O. It participates in carbohydrate degradation; glycolysis; pyruvate from D-glyceraldehyde 3-phosphate: step 4/5. Functionally, catalyzes the reversible conversion of 2-phosphoglycerate (2-PG) into phosphoenolpyruvate (PEP). It is essential for the degradation of carbohydrates via glycolysis. This Pyrococcus horikoshii (strain ATCC 700860 / DSM 12428 / JCM 9974 / NBRC 100139 / OT-3) protein is Enolase.